A 216-amino-acid polypeptide reads, in one-letter code: Large ribosomal subunit protein uL1A (216 aa).

A phosphoserine mark is found at S85 and S128.

This sequence belongs to the universal ribosomal protein uL1 family. Component of the large ribosomal subunit (LSU). Mature yeast ribosomes consist of a small (40S) and a large (60S) subunit. The 40S small subunit contains 1 molecule of ribosomal RNA (18S rRNA) and at least 33 different proteins. The large 60S subunit contains 3 rRNA molecules (25S, 5.8S and 5S rRNA) and at least 46 different proteins. uL1 forms part of the L1 stalk.

The protein localises to the cytoplasm. Its function is as follows. Component of the ribosome, a large ribonucleoprotein complex responsible for the synthesis of proteins in the cell. The small ribosomal subunit (SSU) binds messenger RNAs (mRNAs) and translates the encoded message by selecting cognate aminoacyl-transfer RNA (tRNA) molecules. The large subunit (LSU) contains the ribosomal catalytic site termed the peptidyl transferase center (PTC), which catalyzes the formation of peptide bonds, thereby polymerizing the amino acids delivered by tRNAs into a polypeptide chain. The nascent polypeptides leave the ribosome through a tunnel in the LSU and interact with protein factors that function in enzymatic processing, targeting, and the membrane insertion of nascent chains at the exit of the ribosomal tunnel. uL1 forms part of the L1 stalk, a mobile element that plays a role in evacuating the exit-site tRNA. The sequence is that of Large ribosomal subunit protein uL1A (rpl102) from Schizosaccharomyces pombe (strain 972 / ATCC 24843) (Fission yeast).